A 256-amino-acid polypeptide reads, in one-letter code: MLNIGPFSFHSRLLLGTGKFPDFDVQQKAIDVSEAEILTFAVRRMDIFDAKQPNLLERLDVKKYTLLPNTAGAKNAEEAVRIAKLAKASGLCDMIKVEVIGDDRTLLPDPVETLKASEMLLEEGFIVLPYTSDDVVLARKLQELGVHAIMPGASPIGSGLGIVNPLNLSFIIEQATLPVIVDAGIGSPADAAFAMELGADGVLLNTAVSGAKDPIKMAQAMKLSIEAGRLGFEAGRIARKRCATASSPLEGMSVVE.

The Schiff-base intermediate with DXP role is filled by Lys-96. Residues Gly-157, 183-184, and 205-206 each bind 1-deoxy-D-xylulose 5-phosphate; these read AG and NT.

The protein belongs to the ThiG family. Homotetramer. Forms heterodimers with either ThiH or ThiS.

It is found in the cytoplasm. The enzyme catalyses [ThiS sulfur-carrier protein]-C-terminal-Gly-aminoethanethioate + 2-iminoacetate + 1-deoxy-D-xylulose 5-phosphate = [ThiS sulfur-carrier protein]-C-terminal Gly-Gly + 2-[(2R,5Z)-2-carboxy-4-methylthiazol-5(2H)-ylidene]ethyl phosphate + 2 H2O + H(+). It participates in cofactor biosynthesis; thiamine diphosphate biosynthesis. Its function is as follows. Catalyzes the rearrangement of 1-deoxy-D-xylulose 5-phosphate (DXP) to produce the thiazole phosphate moiety of thiamine. Sulfur is provided by the thiocarboxylate moiety of the carrier protein ThiS. In vitro, sulfur can be provided by H(2)S. The chain is Thiazole synthase from Bacillus cereus (strain AH187).